We begin with the raw amino-acid sequence, 196 residues long: Ribonuclease HII (196 aa).

In terms of domain architecture, RNase H type-2 spans 9–196 (RLVAGVDEVG…KPVRRALGIE (188 aa)). Residues Asp-15, Glu-16, and Asp-107 each contribute to the a divalent metal cation site.

It belongs to the RNase HII family. Mn(2+) serves as cofactor. It depends on Mg(2+) as a cofactor.

The protein localises to the cytoplasm. It catalyses the reaction Endonucleolytic cleavage to 5'-phosphomonoester.. In terms of biological role, endonuclease that specifically degrades the RNA of RNA-DNA hybrids. This chain is Ribonuclease HII, found in Aeromonas hydrophila subsp. hydrophila (strain ATCC 7966 / DSM 30187 / BCRC 13018 / CCUG 14551 / JCM 1027 / KCTC 2358 / NCIMB 9240 / NCTC 8049).